Here is a 262-residue protein sequence, read N- to C-terminus: Small ribosomal subunit protein eS1 (262 aa).

Over residues 234-251 (DPKEDSGKNVKSLPESKE) the composition is skewed to basic and acidic residues. The segment at 234-262 (DPKEDSGKNVKSLPESKEATNILTAELKH) is disordered.

It belongs to the eukaryotic ribosomal protein eS1 family. In terms of assembly, component of the small ribosomal subunit. Mature ribosomes consist of a small (40S) and a large (60S) subunit. The 40S subunit contains about 33 different proteins and 1 molecule of RNA (18S). The 60S subunit contains about 49 different proteins and 3 molecules of RNA (25S, 5.8S and 5S).

The protein resides in the cytoplasm. This is Small ribosomal subunit protein eS1 from Plasmodium yoelii yoelii.